The primary structure comprises 141 residues: Large ribosomal subunit protein uL11 (141 aa).

It belongs to the universal ribosomal protein uL11 family. Part of the ribosomal stalk of the 50S ribosomal subunit. Interacts with L10 and the large rRNA to form the base of the stalk. L10 forms an elongated spine to which L12 dimers bind in a sequential fashion forming a multimeric L10(L12)X complex. Post-translationally, one or more lysine residues are methylated.

Forms part of the ribosomal stalk which helps the ribosome interact with GTP-bound translation factors. In Lactiplantibacillus plantarum (strain ATCC BAA-793 / NCIMB 8826 / WCFS1) (Lactobacillus plantarum), this protein is Large ribosomal subunit protein uL11.